An 842-amino-acid polypeptide reads, in one-letter code: Xyloglucanase Xgh74A (842 aa).

Positions 1-32 are cleaved as a signal peptide; sequence MVKKFTSKIKAAVFAAVVAATAIFGPAISSQA. The active-site Nucleophile is the D70. BNR repeat units lie at residues 134 to 144, 185 to 196, 252 to 262, and 358 to 368; these read RSTDRGETWEK, WRSTDYGVTWSK, YRSTDGGVTWK, and FRSTDGGATWK. Residue D480 is the Proton donor of the active site. BNR repeat units lie at residues 533 to 541, 577 to 586, 616 to 626, 660 to 671, and 708 to 718; these read FSYDGGRNW, VTTDNGNSWK, YISTDGGLTFT, WRSTDGGYTFEK, and FRSDDAGKTWV. Positions 771–841 constitute a Dockerin domain; that stretch reads DKGLVGDLNG…LLQAIPELPK (71 aa).

Belongs to the glycosyl hydrolase 74 family.

Its function is as follows. Hydrolyzes the glucosidic bonds of unbranched Glc residues in tamarind seed xyloglucan, producing XXXG, XLXG, XXLG and XLLG. Has low activity on carboxymethylcellulose, lichenan,hydroxyethylcellulose and glucuronoxylan, and no activity on xylan, polygalaturonic acid, wheat arabinoxylan, rhamnogalacturan, curdlan, laminarin, galactomannan, galactan, arabinan and pachyman or amorphous cellulose. The polypeptide is Xyloglucanase Xgh74A (Acetivibrio thermocellus (strain ATCC 27405 / DSM 1237 / JCM 9322 / NBRC 103400 / NCIMB 10682 / NRRL B-4536 / VPI 7372) (Clostridium thermocellum)).